The following is a 354-amino-acid chain: Protein RecA (354 aa).

67–74 (GPESSGKT) lines the ATP pocket.

This sequence belongs to the RecA family.

The protein resides in the cytoplasm. Can catalyze the hydrolysis of ATP in the presence of single-stranded DNA, the ATP-dependent uptake of single-stranded DNA by duplex DNA, and the ATP-dependent hybridization of homologous single-stranded DNAs. It interacts with LexA causing its activation and leading to its autocatalytic cleavage. In Chlamydia muridarum (strain MoPn / Nigg), this protein is Protein RecA.